The following is a 158-amino-acid chain: MKTYSAKPSEIEKKWWVIDAKNIVLGRLASRVANMLRGKHKPSFTPHLDCGDNIIIINAAHVKLTGKKANTKDGKIYYRHTGFPGGIKNTTAGKILAGKHPERVIKMAVKRMITRNALGAKQMSNLYVYANSDHPHVGQEPVIYDFASQNPKNKSNYL.

Belongs to the universal ribosomal protein uL13 family. Part of the 50S ribosomal subunit.

In terms of biological role, this protein is one of the early assembly proteins of the 50S ribosomal subunit, although it is not seen to bind rRNA by itself. It is important during the early stages of 50S assembly. This chain is Large ribosomal subunit protein uL13, found in Rickettsia canadensis (strain McKiel).